The primary structure comprises 353 residues: tRNA-specific 2-thiouridylase MnmA 2 (353 aa).

Residues 9-16 (AMSGGVDS) and Met35 each bind ATP. Cys98 serves as the catalytic Nucleophile. Residues Cys98 and Cys194 are joined by a disulfide bond. Gly122 contributes to the ATP binding site. Positions 144-146 (KDQ) are interaction with tRNA. The active-site Cysteine persulfide intermediate is the Cys194. Residues 300 to 301 (RY) are interaction with tRNA.

It belongs to the MnmA/TRMU family.

It localises to the cytoplasm. The enzyme catalyses S-sulfanyl-L-cysteinyl-[protein] + uridine(34) in tRNA + AH2 + ATP = 2-thiouridine(34) in tRNA + L-cysteinyl-[protein] + A + AMP + diphosphate + H(+). Catalyzes the 2-thiolation of uridine at the wobble position (U34) of tRNA, leading to the formation of s(2)U34. In Clostridium botulinum (strain Loch Maree / Type A3), this protein is tRNA-specific 2-thiouridylase MnmA 2.